The sequence spans 131 residues: Cuticle protein 79, isoform B (131 aa).

3 consecutive repeat copies span residues 37 to 40, 45 to 48, and 53 to 56.

Its function is as follows. Component of the cuticle of migratory locust which contains more than 100 different structural proteins. This is Cuticle protein 79, isoform B from Locusta migratoria (Migratory locust).